A 323-amino-acid chain; its full sequence is Beta-ketoacyl-[acyl-carrier-protein] synthase III (323 aa).

Residues C114 and H250 contribute to the active site. An ACP-binding region spans residues 251 to 255 (QANLR). The active site involves N280.

Belongs to the thiolase-like superfamily. FabH family. In terms of assembly, homodimer.

Its subcellular location is the cytoplasm. It catalyses the reaction malonyl-[ACP] + acetyl-CoA + H(+) = 3-oxobutanoyl-[ACP] + CO2 + CoA. The protein operates within lipid metabolism; fatty acid biosynthesis. In terms of biological role, catalyzes the condensation reaction of fatty acid synthesis by the addition to an acyl acceptor of two carbons from malonyl-ACP. Catalyzes the first condensation reaction which initiates fatty acid synthesis and may therefore play a role in governing the total rate of fatty acid production. Possesses both acetoacetyl-ACP synthase and acetyl transacylase activities. Its substrate specificity determines the biosynthesis of branched-chain and/or straight-chain of fatty acids. The protein is Beta-ketoacyl-[acyl-carrier-protein] synthase III of Cereibacter sphaeroides (strain ATCC 17025 / ATH 2.4.3) (Rhodobacter sphaeroides).